The sequence spans 257 residues: Imidazole glycerol phosphate synthase subunit HisF (257 aa).

Catalysis depends on residues aspartate 11 and aspartate 130.

Belongs to the HisA/HisF family. As to quaternary structure, heterodimer of HisH and HisF.

The protein resides in the cytoplasm. It carries out the reaction 5-[(5-phospho-1-deoxy-D-ribulos-1-ylimino)methylamino]-1-(5-phospho-beta-D-ribosyl)imidazole-4-carboxamide + L-glutamine = D-erythro-1-(imidazol-4-yl)glycerol 3-phosphate + 5-amino-1-(5-phospho-beta-D-ribosyl)imidazole-4-carboxamide + L-glutamate + H(+). It participates in amino-acid biosynthesis; L-histidine biosynthesis; L-histidine from 5-phospho-alpha-D-ribose 1-diphosphate: step 5/9. In terms of biological role, IGPS catalyzes the conversion of PRFAR and glutamine to IGP, AICAR and glutamate. The HisF subunit catalyzes the cyclization activity that produces IGP and AICAR from PRFAR using the ammonia provided by the HisH subunit. The sequence is that of Imidazole glycerol phosphate synthase subunit HisF from Shewanella frigidimarina (strain NCIMB 400).